Reading from the N-terminus, the 251-residue chain is uncharacterized protein (251 aa).

Disordered stretches follow at residues 1–93, 107–152, 169–188, and 224–251; these read MQPG…ASPG, GLRS…SRPQ, PSSI…VSLS, and LQAQ…STPS. The segment covering 225-234 has biased composition (polar residues); it reads QAQNLPSSGP.

This is an uncharacterized protein from Homo sapiens (Human).